A 1126-amino-acid chain; its full sequence is Protein translocase subunit SecA (1126 aa).

Residues Gln-175, Gly-193 to Thr-197, and Asp-694 contribute to the ATP site. A disordered region spans residues Val-1060–Leu-1126. The segment covering Ala-1064–Asp-1080 has biased composition (basic and acidic residues). Positions 1110, 1112, 1121, and 1122 each coordinate Zn(2+).

This sequence belongs to the SecA family. In terms of assembly, monomer and homodimer. Part of the essential Sec protein translocation apparatus which comprises SecA, SecYEG and auxiliary proteins SecDF. Other proteins may also be involved. Requires Zn(2+) as cofactor.

The protein localises to the cell inner membrane. It localises to the cytoplasm. The enzyme catalyses ATP + H2O + cellular proteinSide 1 = ADP + phosphate + cellular proteinSide 2.. In terms of biological role, part of the Sec protein translocase complex. Interacts with the SecYEG preprotein conducting channel. Has a central role in coupling the hydrolysis of ATP to the transfer of proteins into and across the cell membrane, serving as an ATP-driven molecular motor driving the stepwise translocation of polypeptide chains across the membrane. This chain is Protein translocase subunit SecA, found in Parabacteroides distasonis (strain ATCC 8503 / DSM 20701 / CIP 104284 / JCM 5825 / NCTC 11152).